We begin with the raw amino-acid sequence, 1529 residues long: uncharacterized protein (1529 aa).

The span at 1-11 (MDKNNNNNNSN) shows a compositional bias: low complexity. Disordered stretches follow at residues 1-85 (MDKN…SKGV), 335-371 (LLSN…WSSS), 660-694 (LPNL…TATA), 798-843 (NCNI…SSYS), 1016-1035 (SSLP…NTNN), 1334-1364 (QQQQ…QLQQ), and 1454-1497 (QQQV…SRLP). Over residues 24–42 (QKRVQNPSFSSGQSRTVPS) the composition is skewed to polar residues. Low complexity predominate over residues 51-79 (ISSSSSSSSISTTNNTTTTTTSGTGSTSS). A compositionally biased stretch (low complexity) spans 810–833 (NNNNNNNNNNNNNNNNNNNNNNNN). Polar residues-rich tracts occupy residues 834-843 (VLPRSNSSYS) and 1016-1027 (SSLPISQNLSDD). Positions 1454–1494 (QQQVQTPSSPQTLASLLGNSSSNTLTSSSSTLSLNESSTLS) are enriched in low complexity.

This is an uncharacterized protein from Dictyostelium discoideum (Social amoeba).